Reading from the N-terminus, the 279-residue chain is Bifunctional protein FolD (279 aa).

NADP(+)-binding positions include 166-168 (GRS) and Ser-191.

The protein belongs to the tetrahydrofolate dehydrogenase/cyclohydrolase family. In terms of assembly, homodimer.

The enzyme catalyses (6R)-5,10-methylene-5,6,7,8-tetrahydrofolate + NADP(+) = (6R)-5,10-methenyltetrahydrofolate + NADPH. The catalysed reaction is (6R)-5,10-methenyltetrahydrofolate + H2O = (6R)-10-formyltetrahydrofolate + H(+). It functions in the pathway one-carbon metabolism; tetrahydrofolate interconversion. Catalyzes the oxidation of 5,10-methylenetetrahydrofolate to 5,10-methenyltetrahydrofolate and then the hydrolysis of 5,10-methenyltetrahydrofolate to 10-formyltetrahydrofolate. This chain is Bifunctional protein FolD, found in Shouchella clausii (strain KSM-K16) (Alkalihalobacillus clausii).